The following is a 142-amino-acid chain: UPF0102 protein Bcep1808_0248 (142 aa).

Belongs to the UPF0102 family.

The protein is UPF0102 protein Bcep1808_0248 of Burkholderia vietnamiensis (strain G4 / LMG 22486) (Burkholderia cepacia (strain R1808)).